A 324-amino-acid polypeptide reads, in one-letter code: MKTVTGFASATVGNVACGFDVLGFAITEPGDEVVLALHDERRSDCPVSITSIVGDGGALPLDPKKNTSSFVVLKFLEYIRTTKGISFDGHIDLVLKKNLPLSSGMGSSAASAAAALIAANELFGSPCTKMELVHFAIEGERVACGSAHADNAAPAMLGNFILIRSYNPLDLITIKPPKNLFGTLVHPHTELKTSFARSVLPKSIPLSTATQQWGNVGALIAGLLMEDYDLIGRALVDVVAEPKRAPLIPGFNEVKQAALDAGALGCSIAGSGPSVFAFSSSRQTAEAVGSAMQSAFLHSRAALQSDMWVSPICSQGARIISTTS.

An ATP-binding site is contributed by 100–110 (PLSSGMGSSAA).

This sequence belongs to the GHMP kinase family. Homoserine kinase subfamily.

It localises to the cytoplasm. It carries out the reaction L-homoserine + ATP = O-phospho-L-homoserine + ADP + H(+). The protein operates within amino-acid biosynthesis; L-threonine biosynthesis; L-threonine from L-aspartate: step 4/5. Its function is as follows. Catalyzes the ATP-dependent phosphorylation of L-homoserine to L-homoserine phosphate. The chain is Homoserine kinase from Chlorobaculum tepidum (strain ATCC 49652 / DSM 12025 / NBRC 103806 / TLS) (Chlorobium tepidum).